Reading from the N-terminus, the 140-residue chain is Small ribosomal subunit protein uS19 (140 aa).

It belongs to the universal ribosomal protein uS19 family.

Functionally, protein S19 forms a complex with S13 that binds strongly to the 16S ribosomal RNA. This is Small ribosomal subunit protein uS19 from Sulfolobus acidocaldarius (strain ATCC 33909 / DSM 639 / JCM 8929 / NBRC 15157 / NCIMB 11770).